The sequence spans 733 residues: MTLNPSTLNNGTLGDLKEHKDVVLSSNAQTDEKRFEEPSLEVGGSLAKVENGLSTSISSSASNLEGQQAPFFTKQNSCLSRFRELAQTYNIHEINLEEYVSQIKEVKQSLYSDDSVFNESKSSSPPDAHTDKYFTPCGSPTKLIHSTLLEERDTPSSLEHVSFYLQESAVSEVRFDKPSNNGPLGRSSLNLSSLSHELQTSQDSPSLSATNQLSSSDTLEPLQYPPSSFGSQRQFNASQDSPKRSPSKGSWSSILRRPSLTYSPKRQSTGLHRRSLTNYFKFPHRNAHQHNAIAHNPSVFGKPIGDLTSDPTNLCKFTFPTPECAPPSLLLPHIFAQCVHFLSLNALHVPGIFRISGSGPVIKAITEYFYSPPHFWLDETSEIFKRIGFPSYIDIAAVLKRYIMLLPGGLFTHKDILNLLVPLYVDSSRVKVPIDIRNEMAALCFSQIDSYVRFSILCSLLALLHQIATRTQELENGMENTKDSTLMKPEALGIIFGPLLLGNSSTDLSKSCPSGNVNDLMRFETEKARVEAKIVEGLIIHWPEVLLKINSLDIPNCFSDVGLTDQVAIFTPAVPKEDSPEQIPENVNASEESYPNVKHISKLPLINDSSDNESGNQENDDAVANESTKVVVDNQQPQPKISTVSDTAVPSMSFANNISSRSVISAATDSKPSTRTSPPFVNNTKPIVAKSPVTVTASSETNKKSQKINKKASPRVSLWTKLFGKFRSNKKKS.

The segment covering Val116–Pro125 has biased composition (polar residues). Residues Val116–Thr135 are disordered. Position 141 is a phosphothreonine (Thr141). Residues Arg174–Arg256 form a disordered region. Residues Ser179–Ser195 show a composition bias toward low complexity. Polar residues-rich tracts occupy residues His196–Thr218 and Pro225–Asp240. The region spanning Thr312 to Leu546 is the Rho-GAP domain. A disordered region spans residues Pro692–Ser713. Residues Lys704 to Ser713 are compositionally biased toward basic residues.

The polypeptide is Probable Rho-GTPase-activating protein 6 (rga6) (Schizosaccharomyces pombe (strain 972 / ATCC 24843) (Fission yeast)).